We begin with the raw amino-acid sequence, 169 residues long: MDPLKICENYLTFRSIIKGSTFSPGVFRRWRFHALADVVGNIVEREEGRFWEIVPETHTLWALFRGGFTVAPFTEILTSLQLENRGRQLAFLAFLSFLLRNWPSDSVVSEDARLDLVCAPAWSRIQIWSQAARLINDLPESVFEGQGSVVEEECGEEHLARDSDDPFFD.

The protein belongs to the adenoviridae E1B 19 kDa protein family.

The chain is E1B protein, small T-antigen from Canis lupus familiaris (Dog).